The following is a 379-amino-acid chain: Deoxyuridine 5'-triphosphate nucleotidohydrolase (379 aa).

This sequence belongs to the dUTPase family. Mg(2+) serves as cofactor.

The enzyme catalyses dUTP + H2O = dUMP + diphosphate + H(+). Involved in nucleotide metabolism: produces dUMP, the immediate precursor of thymidine nucleotides and decreases the intracellular concentration of dUTP to avoid uracil incorporation into viral DNA. The sequence is that of Deoxyuridine 5'-triphosphate nucleotidohydrolase from Human herpesvirus 7 (strain JI) (HHV-7).